Consider the following 78-residue polypeptide: Molt-inhibiting hormone (78 aa).

Disulfide bonds link Cys7–Cys44, Cys24–Cys40, and Cys27–Cys53.

It localises to the secreted. In terms of biological role, inhibits Y-organs where molting hormone (ecdysteroid) is secreted. A molting cycle is initiated when MIH secretion diminishes or stops. Also has significant hyperglycemic hormone (CHH) activity. This is Molt-inhibiting hormone from Cancer pagurus (Rock crab).